A 661-amino-acid chain; its full sequence is UvrABC system protein B (661 aa).

The region spanning 25–182 (AGLNSKKRSQ…NDLINLQYKR (158 aa)) is the Helicase ATP-binding domain. 38–45 (GITGSGKT) contacts ATP. A Beta-hairpin motif is present at residues 91-114 (YYDYYQPEAYIARTDTFIEKDSSI). Residues 430 to 592 (QVEDLISEIQ…IIPKTINRAI (163 aa)) form the Helicase C-terminal domain. The 36-residue stretch at 621 to 656 (KANINKLNKEMLKAASNLEFEQAAKLRDQLKTLEAA) folds into the UVR domain.

This sequence belongs to the UvrB family. As to quaternary structure, forms a heterotetramer with UvrA during the search for lesions. Interacts with UvrC in an incision complex.

Its subcellular location is the cytoplasm. Its function is as follows. The UvrABC repair system catalyzes the recognition and processing of DNA lesions. A damage recognition complex composed of 2 UvrA and 2 UvrB subunits scans DNA for abnormalities. Upon binding of the UvrA(2)B(2) complex to a putative damaged site, the DNA wraps around one UvrB monomer. DNA wrap is dependent on ATP binding by UvrB and probably causes local melting of the DNA helix, facilitating insertion of UvrB beta-hairpin between the DNA strands. Then UvrB probes one DNA strand for the presence of a lesion. If a lesion is found the UvrA subunits dissociate and the UvrB-DNA preincision complex is formed. This complex is subsequently bound by UvrC and the second UvrB is released. If no lesion is found, the DNA wraps around the other UvrB subunit that will check the other stand for damage. This chain is UvrABC system protein B, found in Rickettsia akari (strain Hartford).